Consider the following 779-residue polypeptide: MYVEAVRWQRSAASRDVLADYDEQAVTVAPRKREAAGVRAVMVSLQRGMQQMGALRTAAALARLNQRNGFDCPGCAWPEEPGGRKLAEFCENGAKAVAEEATKRTVTAEFFARHSVAELSAKPEYWLSQQGRLAHPMVLRPGDDHYRPISWDAAYQLIAEQLNGLDSPDRAVFYTSGRTSNEAAFCYQLLVRSFGTNNLPDCSNMCHESSGAALTDSIGIGKGSVTIGDVEHADLIVIAGQNPGTNHPRMLSVLGKAKANGAKIIAVNPLPEAGLIRFKDPQKVNGVVGHGIPIADEFVQIRLGGDMALFAGLGRLLLEAEERVPGSVVDRSFVDNHCAGFDGYRRRTLQVGLDTVMDATGIELAQLQRVAAMLMASQRTVICWAMGLTQHAHAVATIGEVTNVLLLRGMIGKPGAGVCPVRGHSNVQGDRTMGIWEKMPEQFLAALDREFGITSPRAHGFDTVAAIRAMRDGRVSVFMGMGGNFASATPDTAVTEAALRRCALTVQVSTKLNRSHLVHGATALILPTLGRTDRDTRNGRKQLVSVEDSMSMVHLSRGSLHPPSDQVRSEVQIICQLARALFGPGHPVPWERFADDYDTIRDAIAAVVPGCDDYNHKVRVPDGFQLPHPPRDAREFRTSTGKANFAVNPLQWVPVPPGRLVLQTLRSHDQYNTTIYGLDDRYRGVKGGRRVVFINPADIETFGLTAGDRVDLVSEWTDGQGGLQERRAKDFLVVAYSTPVGNAAAYYPETNPLVPLDHTAAQSNTPVSKAIIVRLEPTA.

Positions 72 and 75 each coordinate [4Fe-4S] cluster.

The protein belongs to the prokaryotic molybdopterin-containing oxidoreductase family. [4Fe-4S] cluster is required as a cofactor. Mo-bis(molybdopterin guanine dinucleotide) serves as cofactor.

This is an uncharacterized protein from Mycobacterium bovis (strain ATCC BAA-935 / AF2122/97).